The following is a 508-amino-acid chain: Photosystem II CP47 reaction center protein (508 aa).

6 consecutive transmembrane segments (helical) span residues 21 to 36, 101 to 115, 140 to 156, 203 to 218, 237 to 252, and 457 to 472; these read AVHL…WAGS, ILLS…IWHW, GIHL…FGAF, IAAG…FHLS, VLSS…AFVV, and WFAL…HGAR.

Belongs to the PsbB/PsbC family. PsbB subfamily. PSII is composed of 1 copy each of membrane proteins PsbA, PsbB, PsbC, PsbD, PsbE, PsbF, PsbH, PsbI, PsbJ, PsbK, PsbL, PsbM, PsbT, PsbX, PsbY, PsbZ, Psb30/Ycf12, at least 3 peripheral proteins of the oxygen-evolving complex and a large number of cofactors. It forms dimeric complexes. Requires Binds multiple chlorophylls. PSII binds additional chlorophylls, carotenoids and specific lipids. as cofactor.

The protein localises to the plastid. It is found in the chloroplast thylakoid membrane. Functionally, one of the components of the core complex of photosystem II (PSII). It binds chlorophyll and helps catalyze the primary light-induced photochemical processes of PSII. PSII is a light-driven water:plastoquinone oxidoreductase, using light energy to abstract electrons from H(2)O, generating O(2) and a proton gradient subsequently used for ATP formation. The protein is Photosystem II CP47 reaction center protein of Nephroselmis olivacea (Green alga).